Here is a 187-residue protein sequence, read N- to C-terminus: UPF0340 protein SPT_0687 (187 aa).

This sequence belongs to the UPF0340 family.

This is UPF0340 protein SPT_0687 from Streptococcus pneumoniae (strain Taiwan19F-14).